The chain runs to 334 residues: Holliday junction branch migration complex subunit RuvB (334 aa).

The segment at 1 to 181 (MQDRLISGTE…FGIVQRLEFY (181 aa)) is large ATPase domain (RuvB-L). Residues Ile-20, Arg-21, Gly-62, Lys-65, Thr-66, Thr-67, 128-130 (EDY), Arg-171, Tyr-181, and Arg-218 each bind ATP. Thr-66 is a Mg(2+) binding site. Residues 182–252 (SVEDLTHIVS…MAQRALDMLN (71 aa)) form a small ATPAse domain (RuvB-S) region. The segment at 255-334 (KAGLDTLDRR…FGMTPPEPKN (80 aa)) is head domain (RuvB-H). 2 residues coordinate DNA: Arg-310 and Arg-315.

It belongs to the RuvB family. Homohexamer. Forms an RuvA(8)-RuvB(12)-Holliday junction (HJ) complex. HJ DNA is sandwiched between 2 RuvA tetramers; dsDNA enters through RuvA and exits via RuvB. An RuvB hexamer assembles on each DNA strand where it exits the tetramer. Each RuvB hexamer is contacted by two RuvA subunits (via domain III) on 2 adjacent RuvB subunits; this complex drives branch migration. In the full resolvosome a probable DNA-RuvA(4)-RuvB(12)-RuvC(2) complex forms which resolves the HJ.

It localises to the cytoplasm. The enzyme catalyses ATP + H2O = ADP + phosphate + H(+). The RuvA-RuvB-RuvC complex processes Holliday junction (HJ) DNA during genetic recombination and DNA repair, while the RuvA-RuvB complex plays an important role in the rescue of blocked DNA replication forks via replication fork reversal (RFR). RuvA specifically binds to HJ cruciform DNA, conferring on it an open structure. The RuvB hexamer acts as an ATP-dependent pump, pulling dsDNA into and through the RuvAB complex. RuvB forms 2 homohexamers on either side of HJ DNA bound by 1 or 2 RuvA tetramers; 4 subunits per hexamer contact DNA at a time. Coordinated motions by a converter formed by DNA-disengaged RuvB subunits stimulates ATP hydrolysis and nucleotide exchange. Immobilization of the converter enables RuvB to convert the ATP-contained energy into a lever motion, pulling 2 nucleotides of DNA out of the RuvA tetramer per ATP hydrolyzed, thus driving DNA branch migration. The RuvB motors rotate together with the DNA substrate, which together with the progressing nucleotide cycle form the mechanistic basis for DNA recombination by continuous HJ branch migration. Branch migration allows RuvC to scan DNA until it finds its consensus sequence, where it cleaves and resolves cruciform DNA. The polypeptide is Holliday junction branch migration complex subunit RuvB (Acinetobacter baumannii (strain AB307-0294)).